A 479-amino-acid polypeptide reads, in one-letter code: Aspartyl/glutamyl-tRNA(Asn/Gln) amidotransferase subunit B (479 aa).

This sequence belongs to the GatB/GatE family. GatB subfamily. As to quaternary structure, heterotrimer of A, B and C subunits.

It catalyses the reaction L-glutamyl-tRNA(Gln) + L-glutamine + ATP + H2O = L-glutaminyl-tRNA(Gln) + L-glutamate + ADP + phosphate + H(+). It carries out the reaction L-aspartyl-tRNA(Asn) + L-glutamine + ATP + H2O = L-asparaginyl-tRNA(Asn) + L-glutamate + ADP + phosphate + 2 H(+). Allows the formation of correctly charged Asn-tRNA(Asn) or Gln-tRNA(Gln) through the transamidation of misacylated Asp-tRNA(Asn) or Glu-tRNA(Gln) in organisms which lack either or both of asparaginyl-tRNA or glutaminyl-tRNA synthetases. The reaction takes place in the presence of glutamine and ATP through an activated phospho-Asp-tRNA(Asn) or phospho-Glu-tRNA(Gln). This chain is Aspartyl/glutamyl-tRNA(Asn/Gln) amidotransferase subunit B, found in Geotalea uraniireducens (strain Rf4) (Geobacter uraniireducens).